The sequence spans 407 residues: Carbamoyl phosphate synthase small chain (407 aa).

The segment at 1-203 (MSQNESGTIA…EPCGEYEGKE (203 aa)) is CPSase. Residues Ser-61, Gly-255, and Gly-257 each coordinate L-glutamine. The Glutamine amidotransferase type-1 domain maps to 207 to 405 (TVAAVDLGIK…CELMKNNSKE (199 aa)). The Nucleophile role is filled by Cys-283. Residues Phe-284, Gln-287, Asn-325, Gly-327, and Phe-328 each contribute to the L-glutamine site. Residues His-378 and Glu-380 contribute to the active site.

Belongs to the CarA family. In terms of assembly, composed of two chains; the small (or glutamine) chain promotes the hydrolysis of glutamine to ammonia, which is used by the large (or ammonia) chain to synthesize carbamoyl phosphate. Tetramer of heterodimers (alpha,beta)4.

It carries out the reaction hydrogencarbonate + L-glutamine + 2 ATP + H2O = carbamoyl phosphate + L-glutamate + 2 ADP + phosphate + 2 H(+). The enzyme catalyses L-glutamine + H2O = L-glutamate + NH4(+). Its pathway is amino-acid biosynthesis; L-arginine biosynthesis; carbamoyl phosphate from bicarbonate: step 1/1. It participates in pyrimidine metabolism; UMP biosynthesis via de novo pathway; (S)-dihydroorotate from bicarbonate: step 1/3. In terms of biological role, small subunit of the glutamine-dependent carbamoyl phosphate synthetase (CPSase). CPSase catalyzes the formation of carbamoyl phosphate from the ammonia moiety of glutamine, carbonate, and phosphate donated by ATP, constituting the first step of 2 biosynthetic pathways, one leading to arginine and/or urea and the other to pyrimidine nucleotides. The small subunit (glutamine amidotransferase) binds and cleaves glutamine to supply the large subunit with the substrate ammonia. The polypeptide is Carbamoyl phosphate synthase small chain (Bifidobacterium longum (strain DJO10A)).